The primary structure comprises 172 residues: Large ribosomal subunit protein uL10 (172 aa).

Belongs to the universal ribosomal protein uL10 family. In terms of assembly, part of the ribosomal stalk of the 50S ribosomal subunit. The N-terminus interacts with L11 and the large rRNA to form the base of the stalk. The C-terminus forms an elongated spine to which L12 dimers bind in a sequential fashion forming a multimeric L10(L12)X complex.

Functionally, forms part of the ribosomal stalk, playing a central role in the interaction of the ribosome with GTP-bound translation factors. This is Large ribosomal subunit protein uL10 from Rhodopseudomonas palustris (strain BisA53).